Consider the following 548-residue polypeptide: C-type lectin domain family 4 member F (548 aa).

At 1 to 42 (MKEAELNRDMARYCTDNQCVSLQPQGLGPKSAALMAPRTLRH) the chain is on the cytoplasmic side. Residues 43 to 69 (VQVILALMVVTVIFSLLALFVVASQPW) form a helical; Signal-anchor for type II membrane protein membrane-spanning segment. Over 70–548 (RPEWNKEPPS…STGWSAARVG (479 aa)) the chain is Extracellular. Asn-86, Asn-92, Asn-115, Asn-132, Asn-209, and Asn-255 each carry an N-linked (GlcNAc...) asparagine glycan. Positions 438–538 (KFCTSQGAHL…GSSYPWVCKK (101 aa)) constitute a C-type lectin domain. Cystine bridges form between Cys-440–Cys-536 and Cys-516–Cys-528.

As to expression, kupffer cells.

It is found in the membrane. Functionally, receptor with an affinity for galactose and fucose. Could be involved in endocytosis. The chain is C-type lectin domain family 4 member F (Clec4f) from Mus musculus (Mouse).